Consider the following 349-residue polypeptide: Probable dual-specificity RNA methyltransferase RlmN (349 aa).

The active-site Proton acceptor is the glutamate 94. The Radical SAM core domain maps to aspartate 100–arginine 321. A disulfide bridge connects residues cysteine 107 and cysteine 332. Residues cysteine 114, cysteine 118, and cysteine 121 each coordinate [4Fe-4S] cluster. S-adenosyl-L-methionine contacts are provided by residues glycine 159–glutamate 160, serine 191, serine 213–histidine 215, and histidine 289. Catalysis depends on cysteine 332, which acts as the S-methylcysteine intermediate.

It belongs to the radical SAM superfamily. RlmN family. [4Fe-4S] cluster is required as a cofactor.

The protein resides in the cytoplasm. The catalysed reaction is adenosine(2503) in 23S rRNA + 2 reduced [2Fe-2S]-[ferredoxin] + 2 S-adenosyl-L-methionine = 2-methyladenosine(2503) in 23S rRNA + 5'-deoxyadenosine + L-methionine + 2 oxidized [2Fe-2S]-[ferredoxin] + S-adenosyl-L-homocysteine. It carries out the reaction adenosine(37) in tRNA + 2 reduced [2Fe-2S]-[ferredoxin] + 2 S-adenosyl-L-methionine = 2-methyladenosine(37) in tRNA + 5'-deoxyadenosine + L-methionine + 2 oxidized [2Fe-2S]-[ferredoxin] + S-adenosyl-L-homocysteine. Functionally, specifically methylates position 2 of adenine 2503 in 23S rRNA and position 2 of adenine 37 in tRNAs. The polypeptide is Probable dual-specificity RNA methyltransferase RlmN (Phocaeicola vulgatus (strain ATCC 8482 / DSM 1447 / JCM 5826 / CCUG 4940 / NBRC 14291 / NCTC 11154) (Bacteroides vulgatus)).